A 334-amino-acid polypeptide reads, in one-letter code: Phospho-N-acetylmuramoyl-pentapeptide-transferase (334 aa).

The next 9 membrane-spanning stretches (helical) occupy residues 5–25 (VVWL…PVTI), 52–72 (PTMG…VLLV), 81–101 (GLVV…DDFI), 116–136 (KILG…FKLG), 148–168 (GISF…VLLG), 181–200 (GLAS…LALV), 230–250 (VFMG…GAVV), 256–276 (LLVV…IQVI), and 309–329 (FWLL…DFWL).

This sequence belongs to the glycosyltransferase 4 family. MraY subfamily. Mg(2+) is required as a cofactor.

The protein localises to the cell membrane. It carries out the reaction UDP-N-acetyl-alpha-D-muramoyl-L-alanyl-gamma-D-glutamyl-meso-2,6-diaminopimeloyl-D-alanyl-D-alanine + di-trans,octa-cis-undecaprenyl phosphate = di-trans,octa-cis-undecaprenyl diphospho-N-acetyl-alpha-D-muramoyl-L-alanyl-D-glutamyl-meso-2,6-diaminopimeloyl-D-alanyl-D-alanine + UMP. Its pathway is cell wall biogenesis; peptidoglycan biosynthesis. Catalyzes the initial step of the lipid cycle reactions in the biosynthesis of the cell wall peptidoglycan: transfers peptidoglycan precursor phospho-MurNAc-pentapeptide from UDP-MurNAc-pentapeptide onto the lipid carrier undecaprenyl phosphate, yielding undecaprenyl-pyrophosphoryl-MurNAc-pentapeptide, known as lipid I. The sequence is that of Phospho-N-acetylmuramoyl-pentapeptide-transferase from Desulforamulus reducens (strain ATCC BAA-1160 / DSM 100696 / MI-1) (Desulfotomaculum reducens).